The sequence spans 459 residues: MEEDRESRVSAKPSGDRVDRLRNLPDCLLFKILLNLPTKDVVKLSVLSRRWRNVWRYVPGLDLECGDFMVREYYDSSEFNALLGFVYRFLGFNSESCLQKFKLTVNWYDDVQLETVHFTEWFNAVVKRKVQHLHILDKTWGRDEVVIPPTVFTCGSLISLNLYDVYLPNREFVSLPSLKVIVLDAVVFDEDFAFEMLVSGCPVLESLSVNKINLNDISESVQVSSQSLLSFSYVADDDDYLEVVIDAPRLHYLKLNDKRTASFIMKNHGSLLKADIDFVFNLGSEYMFDPNYLPTRHIIRDFLVGLSGVKDMIISSSTLQVIYDYSRCEQLPLFRNVSFLRVEFADYRWEMLPIFLESCPNLKSLVLGFSIPPGKEGANILPGPRRFLTSLEYVKIAKPMAAEASEIKLKLVSYFLENSTILKKLTLCLRNFREKEESVIVKKLLTIPRLSPSCQVFVL.

Residues 18-64 (VDRLRNLPDCLLFKILLNLPTKDVVKLSVLSRRWRNVWRYVPGLDLE) form the F-box domain. The 55-residue stretch at 375–429 (KEGANILPGPRRFLTSLEYVKIAKPMAAEASEIKLKLVSYFLENSTILKKLTLCL) folds into the FBD domain.

This is FBD-associated F-box protein At4g13985 from Arabidopsis thaliana (Mouse-ear cress).